Consider the following 248-residue polypeptide: Small ribosomal subunit protein uS2 (248 aa).

This sequence belongs to the universal ribosomal protein uS2 family.

The sequence is that of Small ribosomal subunit protein uS2 from Alkalilimnicola ehrlichii (strain ATCC BAA-1101 / DSM 17681 / MLHE-1).